Reading from the N-terminus, the 219-residue chain is Elongation factor Ts, chloroplastic (219 aa).

It belongs to the EF-Ts family.

The protein localises to the plastid. The protein resides in the chloroplast. Functionally, associates with the EF-Tu.GDP complex and induces the exchange of GDP to GTP. It remains bound to the aminoacyl-tRNA.EF-Tu.GTP complex up to the GTP hydrolysis stage on the ribosome. The sequence is that of Elongation factor Ts, chloroplastic (tsf) from Guillardia theta (Cryptophyte).